We begin with the raw amino-acid sequence, 1137 residues long: Otoancorin (1137 aa).

An N-terminal signal peptide occupies residues 1–23 (MSQGPRTCSLLLVLLLSHGGAYQ). N-linked (GlcNAc...) asparagine glycans are attached at residues N156, N211, N244, N289, N321, N380, N384, N530, N594, N740, and N798. The segment covering 1095–1115 (HSWQTDPLSSSPTWPASTGSP) has biased composition (polar residues). A disordered region spans residues 1095-1119 (HSWQTDPLSSSPTWPASTGSPTGEP). G1113 carries GPI-anchor amidated glycine lipidation. The propeptide at 1114 to 1137 (SPTGEPASQALWLGCTLLLLTAKS) is removed in mature form.

It belongs to the stereocilin family. Expressed in the inner ear and vestibule.

The protein resides in the apical cell membrane. Its subcellular location is the secreted. The protein localises to the extracellular space. It is found in the extracellular matrix. In terms of biological role, may act as an adhesion molecule. This is Otoancorin (Otoa) from Mus musculus (Mouse).